We begin with the raw amino-acid sequence, 361 residues long: Ribosomal RNA large subunit methyltransferase M (361 aa).

S-adenosyl-L-methionine is bound by residues Ser-187, 220 to 223 (CPGG), Asp-239, Asp-259, and Asp-276. Lys-305 serves as the catalytic Proton acceptor.

This sequence belongs to the class I-like SAM-binding methyltransferase superfamily. RNA methyltransferase RlmE family. RlmM subfamily. As to quaternary structure, monomer.

The protein localises to the cytoplasm. It carries out the reaction cytidine(2498) in 23S rRNA + S-adenosyl-L-methionine = 2'-O-methylcytidine(2498) in 23S rRNA + S-adenosyl-L-homocysteine + H(+). Its function is as follows. Catalyzes the 2'-O-methylation at nucleotide C2498 in 23S rRNA. The polypeptide is Ribosomal RNA large subunit methyltransferase M (Shewanella putrefaciens (strain CN-32 / ATCC BAA-453)).